We begin with the raw amino-acid sequence, 326 residues long: tRNA-modifying protein YgfZ (326 aa).

The folate site is built by Trp-27 and Trp-189.

Belongs to the tRNA-modifying YgfZ family.

It is found in the cytoplasm. Its function is as follows. Folate-binding protein involved in regulating the level of ATP-DnaA and in the modification of some tRNAs. It is probably a key factor in regulatory networks that act via tRNA modification, such as initiation of chromosomal replication. The sequence is that of tRNA-modifying protein YgfZ from Enterobacter sp. (strain 638).